We begin with the raw amino-acid sequence, 429 residues long: Endoglucanase type C (429 aa).

The first 18 residues, 1–18 (MKSLSLILSALAVQVAVA), serve as a signal peptide directing secretion. At Gln-19 the chain carries Pyrrolidone carboxylic acid. Disulfide bonds link Cys-36/Cys-42, Cys-66/Cys-88, Cys-78/Cys-84, Cys-156/Cys-383, Cys-190/Cys-213, Cys-194/Cys-212, Cys-233/Cys-252, Cys-241/Cys-246, and Cys-257/Cys-333. An N-linked (GlcNAc...) asparagine glycan is attached at Asn-74. Glu-215 acts as the Nucleophile in catalysis. The Proton donor role is filled by Glu-220. N-linked (GlcNAc...) asparagine glycans are attached at residues Asn-265 and Asn-318.

It belongs to the glycosyl hydrolase 7 (cellulase C) family.

The enzyme catalyses Endohydrolysis of (1-&gt;4)-beta-D-glucosidic linkages in cellulose, lichenin and cereal beta-D-glucans.. In Fusarium oxysporum (Fusarium vascular wilt), this protein is Endoglucanase type C.